Here is a 1637-residue protein sequence, read N- to C-terminus: Serine/threonine-protein kinase Genghis Khan (1637 aa).

Residues 100–369 (FDILKIIGRG…IQDFMDHPWF (270 aa)) enclose the Protein kinase domain. ATP-binding positions include 106–114 (IGRGAFGEV) and Lys129. Asp224 functions as the Proton acceptor in the catalytic mechanism. In terms of domain architecture, AGC-kinase C-terminal spans 370–440 (VGIDWKNIRQ…SLTSSSTLDS (71 aa)). 3 coiled-coil regions span residues 473–587 (VDSV…EDAV), 643–688 (SEKL…LKYT), and 839–881 (DELS…DLQK). The interval 538–575 (RNQKQKLSRQVRDKEEELDGAMQKNDSLRNELRKSDKT) is disordered. Over residues 563–575 (DSLRNELRKSDKT) the composition is skewed to basic and acidic residues. Thr895 carries the post-translational modification Phosphothreonine. The tract at residues 952-971 (NNKDHSSMKEASVSDLSREE) is disordered. The segment at 989-1039 (IHQFLVRTFSSPTKCNHCTSLMVGLTRQGVVCEICGFACHTICCQKVPTTC) adopts a Phorbol-ester/DAG-type zinc-finger fold. The PH domain occupies 1059-1177 (GTAYEGYVKV…WVIALGELHR (119 aa)). Residues 1203-1489 (IRNALCSVII…LPLNNLGNVV (287 aa)) form the CNH domain. The region spanning 1546 to 1559 (ISAPTNFNHISHMG) is the CRIB domain. At Ser1584 the chain carries Phosphoserine. The disordered stretch occupies residues 1611 to 1637 (DYGNDNIISRTPSPMASSFMDGLSNND). Polar residues predominate over residues 1616–1626 (NIISRTPSPMA).

Belongs to the protein kinase superfamily. AGC Ser/Thr protein kinase family. DMPK subfamily. Interacts tightly with GTP-bound but not GDP-bound Cdc42.

It catalyses the reaction L-seryl-[protein] + ATP = O-phospho-L-seryl-[protein] + ADP + H(+). It carries out the reaction L-threonyl-[protein] + ATP = O-phospho-L-threonyl-[protein] + ADP + H(+). Its function is as follows. Acts as a downstream effector for the regulation of actin polymerization by Cdc42. The polypeptide is Serine/threonine-protein kinase Genghis Khan (gek) (Drosophila melanogaster (Fruit fly)).